We begin with the raw amino-acid sequence, 502 residues long: Cytochrome P450 81D1 (502 aa).

Residues 6–26 (IRVVLYSIFSLIFLIISFKFL) form a helical membrane-spanning segment. Residue cysteine 440 participates in heme binding.

The protein belongs to the cytochrome P450 family. Requires heme as cofactor.

Its subcellular location is the membrane. This chain is Cytochrome P450 81D1 (CYP81D1), found in Arabidopsis thaliana (Mouse-ear cress).